The following is a 210-amino-acid chain: Small ribosomal subunit protein uS3 (210 aa).

One can recognise a KH type-2 domain in the interval 17–86 (IDEFLEKELR…NPQIDVQEIK (70 aa)).

It belongs to the universal ribosomal protein uS3 family. In terms of assembly, part of the 30S ribosomal subunit.

In terms of biological role, binds the lower part of the 30S subunit head. The sequence is that of Small ribosomal subunit protein uS3 from Pyrococcus abyssi (strain GE5 / Orsay).